The sequence spans 110 residues: MTDTLSRLAEVLESRKDAAADSSYVASLYHKGLNKILEKLGEESIETIIAAKDAAVSGNCSDVIYETADLWFHSMVMLAALGQHPQAVLDELDRRFGLSGHAEKAARTAE.

Belongs to the PRA-PH family.

The protein resides in the cytoplasm. It carries out the reaction 1-(5-phospho-beta-D-ribosyl)-ATP + H2O = 1-(5-phospho-beta-D-ribosyl)-5'-AMP + diphosphate + H(+). It functions in the pathway amino-acid biosynthesis; L-histidine biosynthesis; L-histidine from 5-phospho-alpha-D-ribose 1-diphosphate: step 2/9. The chain is Phosphoribosyl-ATP pyrophosphatase from Pseudomonas syringae pv. syringae (strain B728a).